Consider the following 163-residue polypeptide: NADH-quinone oxidoreductase subunit I (163 aa).

4Fe-4S ferredoxin-type domains are found at residues 55 to 84 and 94 to 123; these read RRYP…IEAE and TRYD…EGPN. Residues Cys-64, Cys-67, Cys-70, Cys-74, Cys-103, Cys-106, Cys-109, and Cys-113 each coordinate [4Fe-4S] cluster.

Belongs to the complex I 23 kDa subunit family. As to quaternary structure, NDH-1 is composed of 14 different subunits. Subunits NuoA, H, J, K, L, M, N constitute the membrane sector of the complex. [4Fe-4S] cluster serves as cofactor.

Its subcellular location is the cell inner membrane. The enzyme catalyses a quinone + NADH + 5 H(+)(in) = a quinol + NAD(+) + 4 H(+)(out). In terms of biological role, NDH-1 shuttles electrons from NADH, via FMN and iron-sulfur (Fe-S) centers, to quinones in the respiratory chain. The immediate electron acceptor for the enzyme in this species is believed to be ubiquinone. Couples the redox reaction to proton translocation (for every two electrons transferred, four hydrogen ions are translocated across the cytoplasmic membrane), and thus conserves the redox energy in a proton gradient. The sequence is that of NADH-quinone oxidoreductase subunit I from Caulobacter vibrioides (strain ATCC 19089 / CIP 103742 / CB 15) (Caulobacter crescentus).